The following is a 308-amino-acid chain: Putative cathepsin L 3 (308 aa).

The first 21 residues, 1 to 21, serve as a signal peptide directing secretion; sequence MKQFLTAAIVTLLMTAGYYHL. Positions 22–110 are cleaved as a propeptide — activation peptide; it reads QEDDTNDFER…GASLPEVQLE (89 aa). Cystine bridges form between Cys129/Cys170 and Cys254/Cys298. Residues His261 and Asn278 contribute to the active site.

Belongs to the peptidase C1 family.

The protein resides in the secreted. It carries out the reaction Specificity close to that of papain. As compared to cathepsin B, cathepsin L exhibits higher activity toward protein substrates, but has little activity on Z-Arg-Arg-NHMec, and no peptidyl-dipeptidase activity.. Its function is as follows. May be involved in extracellular digestion. The sequence is that of Putative cathepsin L 3 from Paramecium tetraurelia.